The following is a 324-amino-acid chain: Endochitinase 1 (324 aa).

Residues 1–22 form the signal peptide; it reads MSFLQALSIFLLLLLYVVVGSA. Residues 23 to 64 enclose the Chitin-binding type-1 domain; that stretch reads EQCGRQAGGALCPGGLCCSQFGWCGSTADYCTVPGCQSQCSG. 7 cysteine pairs are disulfide-bonded: Cys-25–Cys-40, Cys-34–Cys-46, Cys-39–Cys-53, Cys-58–Cys-62, Cys-95–Cys-158, Cys-170–Cys-178, and Cys-277–Cys-309. The active-site Proton donor is the Glu-139. Residues 318–324 constitute a propeptide, removed in mature form; the sequence is GVSVDSM.

This sequence belongs to the glycosyl hydrolase 19 family. Chitinase class I subfamily.

It carries out the reaction Random endo-hydrolysis of N-acetyl-beta-D-glucosaminide (1-&gt;4)-beta-linkages in chitin and chitodextrins.. Defense against chitin-containing fungal pathogens. The protein is Endochitinase 1 of Gossypium hirsutum (Upland cotton).